Here is a 201-residue protein sequence, read N- to C-terminus: Holliday junction branch migration complex subunit RuvA (201 aa).

The tract at residues 1–63 is domain I; sequence MYDYIKGTVT…EDNISLFGFQ (63 aa). Residues 64 to 142 form a domain II region; it reads TTEERYLFKK…DVVASEIVYV (79 aa). The segment at 143–153 is flexible linker; that stretch reads APENDMVAGLS. The tract at residues 153–201 is domain III; sequence SPQLEEAVLALEALGYSTRELKKVIPKLAKEEDLTSDAYIKLALQLMTK.

Belongs to the RuvA family. As to quaternary structure, homotetramer. Forms an RuvA(8)-RuvB(12)-Holliday junction (HJ) complex. HJ DNA is sandwiched between 2 RuvA tetramers; dsDNA enters through RuvA and exits via RuvB. An RuvB hexamer assembles on each DNA strand where it exits the tetramer. Each RuvB hexamer is contacted by two RuvA subunits (via domain III) on 2 adjacent RuvB subunits; this complex drives branch migration. In the full resolvosome a probable DNA-RuvA(4)-RuvB(12)-RuvC(2) complex forms which resolves the HJ.

It localises to the cytoplasm. The RuvA-RuvB-RuvC complex processes Holliday junction (HJ) DNA during genetic recombination and DNA repair, while the RuvA-RuvB complex plays an important role in the rescue of blocked DNA replication forks via replication fork reversal (RFR). RuvA specifically binds to HJ cruciform DNA, conferring on it an open structure. The RuvB hexamer acts as an ATP-dependent pump, pulling dsDNA into and through the RuvAB complex. HJ branch migration allows RuvC to scan DNA until it finds its consensus sequence, where it cleaves and resolves the cruciform DNA. This Listeria monocytogenes serotype 4a (strain HCC23) protein is Holliday junction branch migration complex subunit RuvA.